A 532-amino-acid chain; its full sequence is Developmental and secondary metabolism regulator ve1 (532 aa).

A Velvet domain is found at 26-220 (NRSLWYQLTV…ADQGCRVRIR (195 aa)). The short motif at 40-45 (ERARAC) is the Nuclear localization signal element. A compositionally biased stretch (basic residues) spans 217–229 (VRIRRDVRMRKRD). Disordered stretches follow at residues 217–440 (VRIR…TEPS) and 458–520 (PQVD…RADG). Positions 233–250 (GGNNNNNNNAGNNAGNNG) are enriched in low complexity. 2 stretches are compositionally biased toward basic and acidic residues: residues 251–260 (FERREEDFGR) and 283–294 (SEHRASYSDVSR). The segment covering 302–317 (YPPPPPPPPSYDPTPS) has biased composition (pro residues). Over residues 397 to 411 (STSTYVPPSPSVYST) the composition is skewed to low complexity. Residues 435-463 (MNTEPSRGSIKISALVEPMPVIEPQVDPL) are PEST. Polar residues predominate over residues 481–493 (FAQNTRPLFNGQR).

This sequence belongs to the velvet family. VeA subfamily. In terms of assembly, component of the heterotrimeric velvet complex composed of laeA, ve1 and velB; Ve1 acting as a bridging protein between laeA and velB. Interacts directly with laeA and velB.

The protein localises to the nucleus. Its subcellular location is the cytoplasm. Its function is as follows. Component of the velvet transcription factor complex that controls sexual/asexual developmental ratio in response to light, promoting sexual development in the darkness while stimulating asexual sporulation under illumination. The velvet complex hat acts as a global regulator for secondary metabolite gene expression. Controls the expression of the aurofusarin and trichothecene gene clusters. Also controls the expression of the deoxynivalenol (DON) gene cluster. Regulates hyphal growth and pigment formation. Acts as a positive regulator of virulence. The polypeptide is Developmental and secondary metabolism regulator ve1 (Gibberella zeae (strain ATCC MYA-4620 / CBS 123657 / FGSC 9075 / NRRL 31084 / PH-1) (Wheat head blight fungus)).